Here is a 419-residue protein sequence, read N- to C-terminus: UDP-N-acetylmuramoylalanine--D-glutamate ligase (419 aa).

109 to 115 contributes to the ATP binding site; it reads GSTGKTT.

This sequence belongs to the MurCDEF family.

It is found in the cytoplasm. The catalysed reaction is UDP-N-acetyl-alpha-D-muramoyl-L-alanine + D-glutamate + ATP = UDP-N-acetyl-alpha-D-muramoyl-L-alanyl-D-glutamate + ADP + phosphate + H(+). Its pathway is cell wall biogenesis; peptidoglycan biosynthesis. Its function is as follows. Cell wall formation. Catalyzes the addition of glutamate to the nucleotide precursor UDP-N-acetylmuramoyl-L-alanine (UMA). The protein is UDP-N-acetylmuramoylalanine--D-glutamate ligase of Chlamydia felis (strain Fe/C-56) (Chlamydophila felis).